The following is a 205-amino-acid chain: Holliday junction branch migration complex subunit RuvA (205 aa).

The tract at residues 1 to 64 (MIGRLRGVLI…EDAQLLYGFI (64 aa)) is domain I. Positions 65-143 (TKQERSLFRL…SLMEASVGSE (79 aa)) are domain II. A flexible linker region spans residues 144–156 (REFVLQSNYSPAP). Positions 157–205 (TVNSAEEDAISALISLGYKPPQASKAVSAAYKEGMDSETLIKAALKSML) are domain III.

The protein belongs to the RuvA family. As to quaternary structure, homotetramer. Forms an RuvA(8)-RuvB(12)-Holliday junction (HJ) complex. HJ DNA is sandwiched between 2 RuvA tetramers; dsDNA enters through RuvA and exits via RuvB. An RuvB hexamer assembles on each DNA strand where it exits the tetramer. Each RuvB hexamer is contacted by two RuvA subunits (via domain III) on 2 adjacent RuvB subunits; this complex drives branch migration. In the full resolvosome a probable DNA-RuvA(4)-RuvB(12)-RuvC(2) complex forms which resolves the HJ.

Its subcellular location is the cytoplasm. The RuvA-RuvB-RuvC complex processes Holliday junction (HJ) DNA during genetic recombination and DNA repair, while the RuvA-RuvB complex plays an important role in the rescue of blocked DNA replication forks via replication fork reversal (RFR). RuvA specifically binds to HJ cruciform DNA, conferring on it an open structure. The RuvB hexamer acts as an ATP-dependent pump, pulling dsDNA into and through the RuvAB complex. HJ branch migration allows RuvC to scan DNA until it finds its consensus sequence, where it cleaves and resolves the cruciform DNA. This Shewanella sp. (strain MR-7) protein is Holliday junction branch migration complex subunit RuvA.